Consider the following 878-residue polypeptide: Phosphoenolpyruvate carboxylase (878 aa).

Residues histidine 140 and lysine 545 contribute to the active site.

Belongs to the PEPCase type 1 family. Mg(2+) is required as a cofactor.

The catalysed reaction is oxaloacetate + phosphate = phosphoenolpyruvate + hydrogencarbonate. Forms oxaloacetate, a four-carbon dicarboxylic acid source for the tricarboxylic acid cycle. In Pseudomonas paraeruginosa (strain DSM 24068 / PA7) (Pseudomonas aeruginosa (strain PA7)), this protein is Phosphoenolpyruvate carboxylase.